The primary structure comprises 644 residues: Arabinosyltransferase XEG113 (644 aa).

The Cytoplasmic portion of the chain corresponds to 1-17; sequence MVEGWRNGFRDATNSKP. Residues 18–38 form a helical; Signal-anchor for type II membrane protein membrane-spanning segment; sequence LFVTIYATVIIGVLVSSFYVF. Over 39 to 644 the chain is Lumenal; that stretch reads SAIYSPTNGS…QTPEEDHPPL (606 aa). N-linked (GlcNAc...) asparagine glycosylation is found at Asn-46 and Asn-70. A DXD motif motif is present at residues 226 to 228; it reads DTD. N-linked (GlcNAc...) asparagine glycosylation is found at Asn-446 and Asn-542.

Belongs to the glycosyltransferase 77 family.

The protein resides in the golgi apparatus membrane. Its function is as follows. Plays a role in the arabinosylation of cell wall components. Involved in the arabinosylation of extensin proteins in root hair cells. Extensins are structural glycoproteins present in cell walls and its arabinosylation is important for cell elongation, root hair cell development, lateral root development and root hair tip growth. This is Arabinosyltransferase XEG113 from Arabidopsis thaliana (Mouse-ear cress).